Reading from the N-terminus, the 393-residue chain is 4-hydroxyphenylpyruvate dioxygenase (393 aa).

Thr-2 is modified (N-acetylthreonine). 2 VOC domains span residues 18 to 149 (HFHS…LVEK) and 180 to 338 (IIDH…IFTK). Lys-132 is subject to N6-succinyllysine. His-183 contributes to the Fe cation binding site. Ser-211, Ser-226, and Ser-250 each carry phosphoserine. His-266 and Glu-349 together coordinate Fe cation.

The protein belongs to the 4HPPD family. As to quaternary structure, homodimer. Fe cation serves as cofactor.

The protein localises to the cytoplasm. The protein resides in the endoplasmic reticulum membrane. Its subcellular location is the golgi apparatus membrane. The enzyme catalyses 3-(4-hydroxyphenyl)pyruvate + O2 = homogentisate + CO2. It functions in the pathway amino-acid degradation; L-phenylalanine degradation; acetoacetate and fumarate from L-phenylalanine: step 3/6. Catalyzes the conversion of 4-hydroxyphenylpyruvic acid to homogentisic acid, one of the steps in tyrosine catabolism. In Rattus norvegicus (Rat), this protein is 4-hydroxyphenylpyruvate dioxygenase (Hpd).